The sequence spans 252 residues: Probable endonuclease 4 (252 aa).

Histidine 56, histidine 96, glutamate 129, aspartate 162, histidine 165, histidine 191, aspartate 204, histidine 206, and glutamate 233 together coordinate Zn(2+).

The protein belongs to the AP endonuclease 2 family. Zn(2+) serves as cofactor.

The enzyme catalyses Endonucleolytic cleavage to 5'-phosphooligonucleotide end-products.. Its function is as follows. Endonuclease IV plays a role in DNA repair. It cleaves phosphodiester bonds at apurinic or apyrimidinic (AP) sites, generating a 3'-hydroxyl group and a 5'-terminal sugar phosphate. The chain is Probable endonuclease 4 from Mycobacterium tuberculosis (strain ATCC 25177 / H37Ra).